Here is a 144-residue protein sequence, read N- to C-terminus: Small ribosomal subunit protein uS11 (144 aa).

The segment at 123–144 is disordered; sequence EDVTPVPTDSTRRKGSRRGRRL. Residues 135–144 are compositionally biased toward basic residues; sequence RKGSRRGRRL.

It belongs to the universal ribosomal protein uS11 family.

The polypeptide is Small ribosomal subunit protein uS11 (RPS14) (Trypanosoma brucei brucei).